The chain runs to 369 residues: Peptide chain release factor 2 (369 aa).

N5-methylglutamine is present on Q247.

Belongs to the prokaryotic/mitochondrial release factor family. Methylated by PrmC. Methylation increases the termination efficiency of RF2.

It localises to the cytoplasm. Functionally, peptide chain release factor 2 directs the termination of translation in response to the peptide chain termination codons UGA and UAA. This Phenylobacterium zucineum (strain HLK1) protein is Peptide chain release factor 2.